A 327-amino-acid chain; its full sequence is UPF0665 family protein C23C4.06c (327 aa).

This sequence belongs to the UPF0665 family.

Its subcellular location is the cytoplasm. The protein resides in the nucleus. The protein is UPF0665 family protein C23C4.06c of Schizosaccharomyces pombe (strain 972 / ATCC 24843) (Fission yeast).